The sequence spans 232 residues: Large ribosomal subunit protein uL1 (232 aa).

This sequence belongs to the universal ribosomal protein uL1 family. As to quaternary structure, part of the 50S ribosomal subunit.

In terms of biological role, binds directly to 23S rRNA. The L1 stalk is quite mobile in the ribosome, and is involved in E site tRNA release. Protein L1 is also a translational repressor protein, it controls the translation of the L11 operon by binding to its mRNA. This Rhizobium meliloti (strain 1021) (Ensifer meliloti) protein is Large ribosomal subunit protein uL1.